Reading from the N-terminus, the 72-residue chain is Translation initiation factor IF-1 (72 aa).

The 72-residue stretch at 1–72 (MAKDDVIQMQ…SRARIVFRAK (72 aa)) folds into the S1-like domain.

It belongs to the IF-1 family. As to quaternary structure, component of the 30S ribosomal translation pre-initiation complex which assembles on the 30S ribosome in the order IF-2 and IF-3, IF-1 and N-formylmethionyl-tRNA(fMet); mRNA recruitment can occur at any time during PIC assembly.

The protein localises to the cytoplasm. In terms of biological role, one of the essential components for the initiation of protein synthesis. Stabilizes the binding of IF-2 and IF-3 on the 30S subunit to which N-formylmethionyl-tRNA(fMet) subsequently binds. Helps modulate mRNA selection, yielding the 30S pre-initiation complex (PIC). Upon addition of the 50S ribosomal subunit IF-1, IF-2 and IF-3 are released leaving the mature 70S translation initiation complex. This is Translation initiation factor IF-1 from Burkholderia thailandensis (strain ATCC 700388 / DSM 13276 / CCUG 48851 / CIP 106301 / E264).